A 462-amino-acid chain; its full sequence is Anthranilate synthase component 1 (462 aa).

Residues serine 46 and 243–245 (PHM) each bind L-tryptophan. 278-279 (GT) provides a ligand contact to chorismate. Glutamate 305 contacts Mg(2+). Chorismate-binding positions include tyrosine 394, arginine 414, 428–430 (SGG), and glycine 430. Residue glutamate 444 coordinates Mg(2+).

The protein belongs to the anthranilate synthase component I family. In terms of assembly, heterotetramer consisting of two non-identical subunits: a beta subunit (TrpG) and a large alpha subunit (TrpE). The cofactor is Mg(2+).

The enzyme catalyses chorismate + L-glutamine = anthranilate + pyruvate + L-glutamate + H(+). Its pathway is amino-acid biosynthesis; L-tryptophan biosynthesis; L-tryptophan from chorismate: step 1/5. Its activity is regulated as follows. Feedback inhibited by tryptophan. Part of a heterotetrameric complex that catalyzes the two-step biosynthesis of anthranilate, an intermediate in the biosynthesis of L-tryptophan. In the first step, the glutamine-binding beta subunit (TrpG) of anthranilate synthase (AS) provides the glutamine amidotransferase activity which generates ammonia as a substrate that, along with chorismate, is used in the second step, catalyzed by the large alpha subunit of AS (TrpE) to produce anthranilate. In the absence of TrpG, TrpE can synthesize anthranilate directly from chorismate and high concentrations of ammonia. This chain is Anthranilate synthase component 1 (trpE), found in Leptospira biflexa.